A 273-amino-acid polypeptide reads, in one-letter code: MDWLILLKALLLGIVEGLTEFLPISSTGHLILAGDLLNFNDDKAKVFTVAIQLGAILAVCWEYRERLVNIIRNLGTRQANRFVINLFIAFLPAAILGLLFIKTIKHYLFHPMPVAIALVTGGILILWAERREHRIEAETVDDMSWKQALQVGCAQCLALIPGTSRSGATIIGGLLFGLSRKAAAEFSFFLAIPVMFAATFYDVYKHREFLYIDDLGMFATGSVAAFISALIAIRGFIRYISHHDFTLFAWYRIGFGLIVLLTAYSGLVDWSVD.

The next 7 membrane-spanning stretches (helical) occupy residues 4–24 (LILLKALLLGIVEGLTEFLPI), 43–63 (KAKVFTVAIQLGAILAVCWEY), 82–102 (FVINLFIAFLPAAILGLLFIK), 108–128 (LFHPMPVAIALVTGGILILWA), 183–203 (AAEFSFFLAIPVMFAATFYDV), 217–237 (MFATGSVAAFISALIAIRGFI), and 248–268 (FAWYRIGFGLIVLLTAYSGLV).

This sequence belongs to the UppP family.

The protein resides in the cell inner membrane. It catalyses the reaction di-trans,octa-cis-undecaprenyl diphosphate + H2O = di-trans,octa-cis-undecaprenyl phosphate + phosphate + H(+). In terms of biological role, catalyzes the dephosphorylation of undecaprenyl diphosphate (UPP). Confers resistance to bacitracin. This Nitrosomonas europaea (strain ATCC 19718 / CIP 103999 / KCTC 2705 / NBRC 14298) protein is Undecaprenyl-diphosphatase.